The chain runs to 410 residues: Neurotensin receptor type 2 (410 aa).

The Extracellular portion of the chain corresponds to 1–32; that stretch reads METSSPRPPRPSSNPGLSLDARLGVDTRLWAK. A helical transmembrane segment spans residues 33–55; the sequence is VLFTALYALIWALGAAGNALSAH. Topologically, residues 56–64 are cytoplasmic; it reads VVLKARAGR. A helical transmembrane segment spans residues 65–87; sequence AGRLRHHVLSLALAGLLLLLVGV. The Extracellular segment spans residues 88-109; that stretch reads PVELYSFVWFHYPWVFGDLGCR. An intrachain disulfide couples C108 to C194. The chain crosses the membrane as a helical span at residues 110–131; the sequence is GYYFVHELCAYATVLSVAGLSA. Residues 132 to 154 lie on the Cytoplasmic side of the membrane; it reads ERCLAVCQPLRARSLLTPRRTRW. The helical transmembrane segment at 155-176 threads the bilayer; that stretch reads LVALSWAASLGLALPMAVIMGQ. At 177 to 217 the chain is on the extracellular side; it reads KHELETADGEPEPASRVCTVLVSRTALQVFIQVNVLVSFVL. Residues 218–237 traverse the membrane as a helical segment; the sequence is PLALTAFLNGVTVSHLLALC. Over 238 to 297 the chain is Cytoplasmic; that stretch reads SQVPSTSTPGSSTPSRLELLSEEGLLSFIVWKKTFIQGGQVSLVRHKDVRRIRSLQRSVQ. Residues 298–318 traverse the membrane as a helical segment; that stretch reads VLRAIVVMYVICWLPYHARRL. At 319-337 the chain is on the extracellular side; that stretch reads MYCYVPDDAWTDPLYNFYH. The helical transmembrane segment at 338-358 threads the bilayer; it reads YFYMVTNTLFYVSSAVTPLLY. Residues 359-410 are Cytoplasmic-facing; it reads NAVSSSFRKLFLEAVSSLCGEHHPMKRLPPKPQSPTLMDTASGFGDPPETRT. A lipid anchor (S-palmitoyl cysteine) is attached at C377. Residues 381-410 are disordered; sequence HPMKRLPPKPQSPTLMDTASGFGDPPETRT.

This sequence belongs to the G-protein coupled receptor 1 family. Neurotensin receptor subfamily. NTSR2 sub-subfamily. Expressed in prostate (at protein level).

The protein resides in the cell membrane. Functionally, receptor for the tridecapeptide neurotensin. It is associated with G proteins that activate a phosphatidylinositol-calcium second messenger system. This Homo sapiens (Human) protein is Neurotensin receptor type 2 (NTSR2).